A 194-amino-acid chain; its full sequence is Fimbrial protein 987P (194 aa).

The N-terminal stretch at 1–23 (MRMKKSALTLAVLSSLFSGYSLA) is a signal peptide. A disulfide bridge connects residues cysteine 46 and cysteine 85.

The protein belongs to the fimbrial protein family.

Its subcellular location is the fimbrium. In Escherichia coli, this protein is Fimbrial protein 987P (fasA).